A 318-amino-acid polypeptide reads, in one-letter code: ADP-L-glycero-D-manno-heptose-6-epimerase (318 aa).

NADP(+) is bound by residues 10–11 (FI), 31–32 (DN), Lys38, Lys53, 76–80 (QGACS), and Asn93. Catalysis depends on Tyr141, which acts as the Proton acceptor. NADP(+) is bound at residue Lys145. Residue Asn172 coordinates substrate. 2 residues coordinate NADP(+): Val173 and Lys181. Lys181 (proton acceptor) is an active-site residue. Residues Arg183, His190, 204 to 207 (FEGS), Arg212, and Tyr276 contribute to the substrate site.

This sequence belongs to the NAD(P)-dependent epimerase/dehydratase family. HldD subfamily. Homopentamer. Requires NADP(+) as cofactor.

The catalysed reaction is ADP-D-glycero-beta-D-manno-heptose = ADP-L-glycero-beta-D-manno-heptose. It functions in the pathway nucleotide-sugar biosynthesis; ADP-L-glycero-beta-D-manno-heptose biosynthesis; ADP-L-glycero-beta-D-manno-heptose from D-glycero-beta-D-manno-heptose 7-phosphate: step 4/4. In terms of biological role, catalyzes the interconversion between ADP-D-glycero-beta-D-manno-heptose and ADP-L-glycero-beta-D-manno-heptose via an epimerization at carbon 6 of the heptose. In Brachyspira hyodysenteriae (strain ATCC 49526 / WA1), this protein is ADP-L-glycero-D-manno-heptose-6-epimerase.